The chain runs to 450 residues: Chromosomal replication initiator protein DnaA (450 aa).

The interval 1 to 84 (MTENEQIFWN…AVDYVYEEDL (84 aa)) is domain I, interacts with DnaA modulators. The domain II stretch occupies residues 84–109 (LIIEQQHQGQQGYTEQAFQQLPAVQS). Residues 110–328 (DLNPKYSFDN…GALKDISLVA (219 aa)) are domain III, AAA+ region. The ATP site is built by G154, G156, K157, and T158. The interval 329 to 450 (NFKQIDTITV…EIETIKNKIK (122 aa)) is domain IV, binds dsDNA.

Belongs to the DnaA family. Oligomerizes as a right-handed, spiral filament on DNA at oriC.

It is found in the cytoplasm. Its function is as follows. Plays an essential role in the initiation and regulation of chromosomal replication. ATP-DnaA binds to the origin of replication (oriC) to initiate formation of the DNA replication initiation complex once per cell cycle. Binds the DnaA box (a 9 base pair repeat at the origin) and separates the double-stranded (ds)DNA. Forms a right-handed helical filament on oriC DNA; dsDNA binds to the exterior of the filament while single-stranded (ss)DNA is stabiized in the filament's interior. The ATP-DnaA-oriC complex binds and stabilizes one strand of the AT-rich DNA unwinding element (DUE), permitting loading of DNA polymerase. After initiation quickly degrades to an ADP-DnaA complex that is not apt for DNA replication. Binds acidic phospholipids. This is Chromosomal replication initiator protein DnaA from Streptococcus equi subsp. zooepidemicus (strain MGCS10565).